The chain runs to 200 residues: MASTVSNTSKLEKPVSLIWGCELNEQDKTFEFKVEDDEEKCEHQLALRTVCLGDKAKDEFNIVEIVTQEEGAEKSVPIATLKPSILPMATMVGIELTPPVTFRLKAGSGPLYISGQHVAMEEDYSWAEEEDEGEAEGEEEEEEEEDQESPPKAVKRPAATKKAGQAKKKKLDKEDESSEEDSPTKKGKGAGRGRKPAAKK.

An N-acetylalanine modification is found at alanine 2. Position 3 is a phosphoserine (serine 3). Threonine 4 carries the phosphothreonine modification. Serine 6 bears the Phosphoserine mark. Threonine 8 is subject to Phosphothreonine. The interval glutamate 35 to glutamate 39 is acidic tract A1. Over residues aspartate 123 to glutamate 148 the composition is skewed to acidic residues. Residues aspartate 123–lysine 200 are disordered. Residues glutamate 128–glutamate 148 are acidic tract A2. Serine 149 is subject to Phosphoserine. Residues alanine 153 to lysine 170 show a composition bias toward basic residues. A Bipartite nuclear localization signal motif is present at residues lysine 155–lysine 170. An acidic tract A3 region spans residues glutamate 174–glutamate 176. 3 positions are modified to phosphoserine: serine 177, serine 178, and serine 182. A compositionally biased stretch (basic residues) spans lysine 185–lysine 200. Arginine 192 is modified (omega-N-methylarginine; by PRMT5; alternate). Arginine 192 carries the symmetric dimethylarginine; by PRMT5; alternate modification.

This sequence belongs to the nucleoplasmin family. As to quaternary structure, homopentamer, when bound to H2A-H2B dimers only. Homodecamer of two stacked pentamers, when bound to H2A-H2B dimers and H3-H4 tetramers simultaneously. Interacts with the heterotetramer formed by wdr77 and prmt5. Activated by phosphorylation of multiple serine/threonine residues, along both core and tail domains. The level of phosphorylation gradually increases during egg maturation, reaching an average of 7-10 phosphates per monomer, so that at the time of fertilization the activity of the protein is maximum. Post-translationally, methylated by prmt5, yielding both monomethylated and symmetrically dimethylated Arg-192.

It localises to the nucleus. Acts as a chaperone for histones, such as histone H2A-H2B, and thus regulates the assembly of nucleosome cores. Involved in chromatin remodeling, especially during fertilization and early embryonic development. May be involved in sperm chromatin decondensation during fertilization. This Xenopus laevis (African clawed frog) protein is Nucleoplasmin.